The chain runs to 1076 residues: Atos homolog protein A (1076 aa).

Positions alanine 24–threonine 32 are transactivation domain 1 (TAD1). Disordered regions lie at residues glutamate 700 to asparagine 721 and serine 739 to serine 765. Residues serine 739–asparagine 754 are compositionally biased toward basic and acidic residues. The interval leucine 878–tyrosine 935 is required for macropage invasion. Positions phenylalanine 962–lysine 970 are transactivation domain 2 (TAD2).

The protein belongs to the ATOS family.

Its subcellular location is the nucleus. Transcription regulator that syncronizes transcriptional and translational programs to promote macrophage invasion of tissues. The protein is Atos homolog protein A of Homo sapiens (Human).